The chain runs to 160 residues: Heat shock protein beta-6 (160 aa).

Positions 1-72 (MEIPVPVQPS…PVAQVPTDPG (72 aa)) are involved in stabilization of the HSPB1:HSBP6 heterodimer. Serine 16 bears the Phosphoserine; by PKA mark. Residues 55–160 (LRAPSVALPV…AQAPPPAAAK (106 aa)) form the sHSP domain. Position 66 is a deamidated glutamine (glutamine 66).

Belongs to the small heat shock protein (HSP20) family. Homodimer. Small heat shock proteins form high molecular mass oligomers containing variable number of monomers; these oligomers display a very flexible quaternary structure easily exchanging their subunits. Heterooligomer with HSPB1; formed through oligomerization of HSPB1:HSBP6 dimers; subunit exchange leads to formation of at least two different heterooligomeric complexes, differing in variable quantities of HSPB1 and HSPB6 homodimers in addition to HSPB1:HSPB6 heterodimers. Heterooligomer with CRYAB; large heterooligomers consist of CRYAB homodimers and HSPB5:HSPB6 heterodimers but lacking HSPB6 homodimers. Interacts with BAG3. Interacts (phosphorylated) with YWHAZ. Interacts with PDE4A and PDE4D; required for maintenance of the non-phosphorylated state of HSPB6 under basal conditions. Interacts with KDR. Interacts with PRKD1. In terms of processing, the N-terminus is blocked. Post-translationally, phosphorylated at Ser-16 by PKA and probably PKD1K; required to protect cardiomyocytes from apoptosis.

It localises to the cytoplasm. It is found in the nucleus. Its subcellular location is the secreted. In terms of biological role, small heat shock protein which functions as a molecular chaperone probably maintaining denatured proteins in a folding-competent state. Seems to have versatile functions in various biological processes. Plays a role in regulating muscle function such as smooth muscle vasorelaxation and cardiac myocyte contractility. May regulate myocardial angiogenesis implicating KDR. Overexpression mediates cardioprotection and angiogenesis after induced damage. Stabilizes monomeric YWHAZ thereby supporting YWHAZ chaperone-like activity. The polypeptide is Heat shock protein beta-6 (HSPB6) (Homo sapiens (Human)).